The sequence spans 247 residues: Probable transcriptional regulatory protein DVU_2259 (247 aa).

A disordered region spans residues 1–22 (MAGHSKWANIQHRKGRQDAKRG).

This sequence belongs to the TACO1 family.

Its subcellular location is the cytoplasm. This chain is Probable transcriptional regulatory protein DVU_2259, found in Nitratidesulfovibrio vulgaris (strain ATCC 29579 / DSM 644 / CCUG 34227 / NCIMB 8303 / VKM B-1760 / Hildenborough) (Desulfovibrio vulgaris).